A 72-amino-acid polypeptide reads, in one-letter code: DNA-directed RNA polymerase subunit Rpo10 (72 aa).

Zn(2+) is bound by residues C7, C10, C53, and C54.

The protein belongs to the archaeal Rpo10/eukaryotic RPB10 RNA polymerase subunit family. In terms of assembly, part of the RNA polymerase complex. Zn(2+) is required as a cofactor.

The protein localises to the cytoplasm. The catalysed reaction is RNA(n) + a ribonucleoside 5'-triphosphate = RNA(n+1) + diphosphate. DNA-dependent RNA polymerase (RNAP) catalyzes the transcription of DNA into RNA using the four ribonucleoside triphosphates as substrates. The polypeptide is DNA-directed RNA polymerase subunit Rpo10 (Thermoplasma volcanium (strain ATCC 51530 / DSM 4299 / JCM 9571 / NBRC 15438 / GSS1)).